A 298-amino-acid polypeptide reads, in one-letter code: Max-like protein X (298 aa).

Residues 1–63 (MTEPGASPED…ARGCREDSSH (63 aa)) form a disordered region. Ser7 carries the phosphoserine modification. The span at 28 to 37 (GRARARRGSG) shows a compositional bias: basic residues. Phosphoserine is present on residues Ser45, Ser48, Ser74, Ser77, and Ser98. Residues 98–109 (SIGSTSASSVPN) show a composition bias toward polar residues. A disordered region spans residues 98-119 (SIGSTSASSVPNTDDEDSDYQQ). The bHLH domain occupies 129-187 (RRRRAHTQAEQKRRDAIKRGYDDLQTIVPTCQQQDFSIGSQKLSKAIVLQKTIDYIQFL). Residues 194–214 (QEEEVSTLRKDVTALKIMKVN) form a leucine-zipper region.

In terms of assembly, efficient DNA binding requires dimerization with another bHLH protein. Binds DNA as a heterodimer with MAD1, MAD4, MNT, WBSCR14 and MLXIP. Can also bind DNA as a homodimer. As to expression, expressed in all tissues examined: stomach, duodenum, jejunum, ileum, colon, liver, pancreas, salivary gland, kidney, spleen, lung, heart, skeletal muscle, brain, ovary and testis.

It localises to the cytoplasm. The protein localises to the nucleus. In terms of biological role, transcription regulator. Forms a sequence-specific DNA-binding protein complex with MAD1, MAD4, MNT, WBSCR14 and MLXIP which recognizes the core sequence 5'-CACGTG-3'. The TCFL4-MAD1, TCFL4-MAD4, TCFL4-WBSCR14 complexes are transcriptional repressors. Plays a role in transcriptional activation of glycolytic target genes. Involved in glucose-responsive gene regulation. The polypeptide is Max-like protein X (Mlx) (Mus musculus (Mouse)).